A 420-amino-acid polypeptide reads, in one-letter code: Glyceraldehyde-3-phosphate dehydrogenase GAPCP2, chloroplastic (420 aa).

A chloroplast-targeting transit peptide spans 1–66; it reads MALSSLLRSA…YNAKRVQPIK (66 aa). NAD(+) contacts are provided by residues 94–95, aspartate 116, and arginine 162; that span reads RI. D-glyceraldehyde 3-phosphate-binding positions include 233-235, threonine 264, 293-294, and arginine 316; these read SCT and TG. Residue cysteine 234 is the Nucleophile of the active site. Position 398 (asparagine 398) interacts with NAD(+).

The protein belongs to the glyceraldehyde-3-phosphate dehydrogenase family. As to quaternary structure, homotetramer. Expressed in shoot and root vasculature, leaf veins and vascular tissue of flowers and siliques.

It localises to the plastid. It is found in the chloroplast stroma. The enzyme catalyses D-glyceraldehyde 3-phosphate + phosphate + NAD(+) = (2R)-3-phospho-glyceroyl phosphate + NADH + H(+). In terms of biological role, involved in plastidial glycolytic pathway and plays a specific role in glycolytic energy production in non-green plastids and chloroplasts. Essential for breakdown of starch to form sucrose for export to non-photosynthetic tissues, and to generate primary metabolites for anabolic pathways such as fatty acid and amino acid synthesis. Plays an important role in plant development by providing substrates for the phosphorylated pathway of serine biosynthesis in roots. Plays a crucial role in pollen development. Functionally redundant with GAPCP1. The sequence is that of Glyceraldehyde-3-phosphate dehydrogenase GAPCP2, chloroplastic (GAPCP2) from Arabidopsis thaliana (Mouse-ear cress).